The primary structure comprises 518 residues: Fusicoccin H C-9 hydroxylase (518 aa).

The chain crosses the membrane as a helical span at residues 12-29 (HLLLISTVIAVLAALIVS). Residues N81 and N168 are each glycosylated (N-linked (GlcNAc...) asparagine). C456 contributes to the heme binding site.

The protein belongs to the cytochrome P450 family. Requires heme as cofactor.

Its subcellular location is the membrane. It participates in mycotoxin biosynthesis. In terms of biological role, cytochrome P450 monooxygenase; part of the 2 gene clusters that mediate the biosynthesis of fusicoccins, diterpene glucosides that display phytohormone-like activity and function as potent activators of plasma membrane H(+)-ATPases in plants by modifying 14-3-3 proteins and cause the plant disease constriction canker. The first step in the pathway is performed by the fusicoccadiene synthase PaFS that possesses both prenyl transferase and terpene cyclase activity, converting isopentenyl diphosphate and dimethylallyl diphosphate into geranylgeranyl diphosphate (GGDP) and successively converting GGDP into fusicocca-2,10(14)-diene, a precursor for fusicoccin H. The second step is the oxidation at the C-8 position by the cytochrome P450 monooxygenase PaP450-2 to yield fusicocca-2,10(14)-diene-8-beta-ol. The cytochrome P450 monooxygenase PaP450-1 then catalyzes the hydroxylation at the C-16 position to produce fusicocca-2,10(14)-diene-8-beta,16-diol. The dioxygenase fc-dox then catalyzes the 16-oxydation of fusicocca-2,10(14)-diene-8-beta,16-diol to yield an aldehyde (8-beta-hydroxyfusicocca-1,10(14)-dien-16-al). The short-chain dehydrogenase/reductase fc-sdr catalyzes the reduction of the aldehyde to yield fusicocca-1,10(14)-diene-8-beta,16-diol. The next step is the hydroxylation at C-9 performed by the cytochrome P450 monooxygenase PaP450-3 that leads to fusicoccin H aglycon which is glycosylated to fusicoccin H by the O-glycosyltransferase PaGT. Hydroxylation at C-12 by the cytochrome P450 monooxygenase PaP450-4 leads then to the production of fusicoccin Q and is followed by methylation by the O-methyltransferase PaMT to yield fusicoccin P. Fusicoccin P is further converted to fusicoccin J via prenylation by the O-glucose prenyltransferase PaPT. Cytochrome P450 monooxygenase PaP450-5 then performs hydroxylation at C-19 to yield dideacetyl-fusicoccin A which is acetylated to 3'-O-deacetyl-fusicoccin A by the O-acetyltransferase PaAT-2. Finally, a another acetylation by the O-acetyltransferase PaAT-1 yields fusicoccin A. This Phomopsis amygdali (Fusicoccum amygdali) protein is Fusicoccin H C-9 hydroxylase.